We begin with the raw amino-acid sequence, 161 residues long: Nucleotide-binding protein XOO0647 (161 aa).

Belongs to the YajQ family.

Functionally, nucleotide-binding protein. This chain is Nucleotide-binding protein XOO0647, found in Xanthomonas oryzae pv. oryzae (strain MAFF 311018).